Here is a 619-residue protein sequence, read N- to C-terminus: 4-hydroxyphenylalkanoate adenylyltransferase (619 aa).

It belongs to the ATP-dependent AMP-binding enzyme family.

It carries out the reaction 17-(4-hydroxyphenyl)heptadecanoate + holo-[(phenol)carboxyphthiodiolenone synthase] + ATP = 17-(4-hydroxyphenyl)heptadecanoyl-[(phenol)carboxyphthiodiolenone synthase] + AMP + diphosphate. It catalyses the reaction 19-(4-hydroxyphenyl)nonadecanoate + holo-[(phenol)carboxyphthiodiolenone synthase] + ATP = 19-(4-hydroxyphenyl)nonadecanoyl-[(phenol)carboxyphthiodiolenone synthase] + AMP + diphosphate. The catalysed reaction is dodecanoate + ATP + H(+) = dodecanoyl-AMP + diphosphate. It functions in the pathway lipid metabolism; fatty acid biosynthesis. Functionally, catalyzes the activation of long-chain fatty acids as acyl-adenylates (acyl-AMP), which are then transferred to the multifunctional polyketide synthase PpsA for further chain extension. Involved in the biosynthesis of phenolphthiocerol, which is an important intermediate in the biosynthesis of phenolic glycolipid (PGL), also called mycosid B. The chain is 4-hydroxyphenylalkanoate adenylyltransferase (fadD29) from Mycobacterium tuberculosis (strain ATCC 25618 / H37Rv).